The following is a 432-amino-acid chain: Probable anion transporter 5 (432 aa).

The first 23 residues, 1–23, serve as a signal peptide directing secretion; the sequence is MKLSNIPQRYVIVFLTFLSTCVC. A run of 11 helical transmembrane segments spans residues 50–70, 78–98, 101–121, 140–160, 164–184, 229–249, 273–293, 305–325, 331–351, 360–380, and 405–425; these read TILSTFFVGYACSQVPGGWAA, VLLLSFVLWSSTCFLVPLDPN, GLLVVARLLVGVAQGFIFPSI, ITTSGMYLGAALGMWLLPALV, GPESVFLAEALAGVIWSLLWI, LPVWAIVVNNFTFHYALYVLM, VPYLNMFVFSIVGGFIADYLI, KFLNTVGFLIASAALMVLPMF, VILCSSVALGFLALGRAGFAV, YAGIVMGVSNTAGTLAGIIGV, and VVFFIPGLLCIFSSVVFLLFS.

This sequence belongs to the major facilitator superfamily. Sodium/anion cotransporter (TC 2.A.1.14) family. Ubiquitous.

The protein localises to the golgi apparatus membrane. Functionally, inorganic phosphate and probable anion transporter. This chain is Probable anion transporter 5 (ANTR5), found in Arabidopsis thaliana (Mouse-ear cress).